The following is a 234-amino-acid chain: Large ribosomal subunit protein uL1 (234 aa).

The protein belongs to the universal ribosomal protein uL1 family. Part of the 50S ribosomal subunit.

Its function is as follows. Binds directly to 23S rRNA. The L1 stalk is quite mobile in the ribosome, and is involved in E site tRNA release. Protein L1 is also a translational repressor protein, it controls the translation of the L11 operon by binding to its mRNA. The chain is Large ribosomal subunit protein uL1 from Salmonella arizonae (strain ATCC BAA-731 / CDC346-86 / RSK2980).